The following is a 548-amino-acid chain: Rhodopsin kinase grk7-b (548 aa).

A Phosphoserine; by PKA modification is found at serine 33. The RGS domain maps to phenylalanine 53 to valine 172. Positions phenylalanine 187–phenylalanine 446 constitute a Protein kinase domain. Residues leucine 193 to valine 201 and lysine 216 contribute to the ATP site. Aspartate 312 serves as the catalytic Proton acceptor. The AGC-kinase C-terminal domain maps to lysine 447–glutamate 512. Positions aspartate 520 to leucine 548 are disordered. Cysteine 545 carries the cysteine methyl ester modification. Cysteine 545 is lipidated: S-geranylgeranyl cysteine. A propeptide spans threonine 546 to leucine 548 (removed in mature form).

This sequence belongs to the protein kinase superfamily. AGC Ser/Thr protein kinase family. GPRK subfamily. Phosphorylation at Ser-33 is regulated by light and activated by cAMP. As to expression, expressed in the eyes (at protein level). Expressed in the eyes, the pineal gland and in the brain.

Its subcellular location is the membrane. The catalysed reaction is L-threonyl-[rhodopsin] + ATP = O-phospho-L-threonyl-[rhodopsin] + ADP + H(+). It carries out the reaction L-seryl-[rhodopsin] + ATP = O-phospho-L-seryl-[rhodopsin] + ADP + H(+). Functionally, retina-specific kinase involved in the shutoff of the photoresponse and adaptation to changing light conditions via cone opsin phosphorylation, including rhodopsin (RHO). The sequence is that of Rhodopsin kinase grk7-b (grk7b) from Danio rerio (Zebrafish).